The sequence spans 434 residues: Adenylosuccinate synthetase (434 aa).

Residues Gly22–Lys28 and Gly50–Thr52 contribute to the GTP site. Residue Asp23 is the Proton acceptor of the active site. Residues Asp23 and Gly50 each coordinate Mg(2+). IMP contacts are provided by residues Asp23 to Lys26, Asn48 to His51, Thr139, Arg153, Gln234, Thr249, and Arg313. The Proton donor role is filled by His51. Ala309–Arg315 is a substrate binding site. Residues Arg315, Lys341–Asp343, and Ser423–Gly425 contribute to the GTP site.

Belongs to the adenylosuccinate synthetase family. Homodimer. Mg(2+) serves as cofactor.

The protein localises to the cytoplasm. The catalysed reaction is IMP + L-aspartate + GTP = N(6)-(1,2-dicarboxyethyl)-AMP + GDP + phosphate + 2 H(+). The protein operates within purine metabolism; AMP biosynthesis via de novo pathway; AMP from IMP: step 1/2. In terms of biological role, plays an important role in the de novo pathway of purine nucleotide biosynthesis. Catalyzes the first committed step in the biosynthesis of AMP from IMP. This is Adenylosuccinate synthetase from Chlorobium phaeobacteroides (strain DSM 266 / SMG 266 / 2430).